Here is a 266-residue protein sequence, read N- to C-terminus: Undecaprenyl-diphosphatase (266 aa).

A run of 8 helical transmembrane segments spans residues 1-21 (MDTFQVIILALIQGLTEFLPI), 39-59 (QGLSFDVAVNTGSLLAVVIYF), 87-107 (WWIILATLPAVFFGFMAKDFI), 111-131 (LRSAEVIAVTTIVFGLLLWWA), 149-169 (ALLIGFAQALALIPGTSRSGA), 183-203 (AAARFSFLMSVPVSLGAAILV), 218-238 (ALTLGTLVSFVAAYLCIHYFL), and 246-266 (MTPFVIYRLILGAVLCGFIFL).

Belongs to the UppP family.

It localises to the cell inner membrane. The enzyme catalyses di-trans,octa-cis-undecaprenyl diphosphate + H2O = di-trans,octa-cis-undecaprenyl phosphate + phosphate + H(+). Functionally, catalyzes the dephosphorylation of undecaprenyl diphosphate (UPP). Confers resistance to bacitracin. The sequence is that of Undecaprenyl-diphosphatase from Shewanella putrefaciens (strain CN-32 / ATCC BAA-453).